The primary structure comprises 333 residues: tRNA(Ile)-lysidine synthase (333 aa).

Ser-25–Ser-30 contacts ATP.

The protein belongs to the tRNA(Ile)-lysidine synthase family.

The protein resides in the cytoplasm. It catalyses the reaction cytidine(34) in tRNA(Ile2) + L-lysine + ATP = lysidine(34) in tRNA(Ile2) + AMP + diphosphate + H(+). Functionally, ligates lysine onto the cytidine present at position 34 of the AUA codon-specific tRNA(Ile) that contains the anticodon CAU, in an ATP-dependent manner. Cytidine is converted to lysidine, thus changing the amino acid specificity of the tRNA from methionine to isoleucine. The polypeptide is tRNA(Ile)-lysidine synthase (Ureaplasma parvum serovar 3 (strain ATCC 700970)).